We begin with the raw amino-acid sequence, 264 residues long: 3-methyl-2-oxobutanoate hydroxymethyltransferase (264 aa).

Positions 45 and 84 each coordinate Mg(2+). 3-methyl-2-oxobutanoate-binding positions include 45–46 (DS), Asp-84, and Lys-112. Residue Glu-114 coordinates Mg(2+). Residue Glu-181 is the Proton acceptor of the active site.

It belongs to the PanB family. Homodecamer; pentamer of dimers. It depends on Mg(2+) as a cofactor.

Its subcellular location is the cytoplasm. It catalyses the reaction 3-methyl-2-oxobutanoate + (6R)-5,10-methylene-5,6,7,8-tetrahydrofolate + H2O = 2-dehydropantoate + (6S)-5,6,7,8-tetrahydrofolate. The protein operates within cofactor biosynthesis; (R)-pantothenate biosynthesis; (R)-pantoate from 3-methyl-2-oxobutanoate: step 1/2. Functionally, catalyzes the reversible reaction in which hydroxymethyl group from 5,10-methylenetetrahydrofolate is transferred onto alpha-ketoisovalerate to form ketopantoate. The sequence is that of 3-methyl-2-oxobutanoate hydroxymethyltransferase from Vibrio parahaemolyticus serotype O3:K6 (strain RIMD 2210633).